We begin with the raw amino-acid sequence, 583 residues long: L-galactono-1,4-lactone dehydrogenase 1, mitochondrial (583 aa).

A mitochondrion-targeting transit peptide spans 1–36 (MRRLLLAGILRRASSSPSSHHHLHLVRALSASSPLP). The propeptide at 37 to 78 (ASDADLRKYAGYALLLLGCGAATYYSFPLPPDALHKKAVPFK) is removed in mature form. Residues 45 to 61 (YAGYALLLLGCGAATYY) form a helical membrane-spanning segment. The FAD-binding PCMH-type domain maps to 95 to 266 (THEVHTRVLL…AEVTLQCVER (172 aa)).

It depends on FAD as a cofactor.

Its subcellular location is the mitochondrion membrane. The catalysed reaction is L-galactono-1,4-lactone + 4 Fe(III)-[cytochrome c] = L-dehydroascorbate + 4 Fe(II)-[cytochrome c] + 5 H(+). Its pathway is cofactor biosynthesis; L-ascorbate biosynthesis. Involved in the biosynthesis of ascorbic acid. The protein is L-galactono-1,4-lactone dehydrogenase 1, mitochondrial (GLDH1) of Oryza sativa subsp. japonica (Rice).